Reading from the N-terminus, the 443-residue chain is UDP-N-acetylmuramate--L-alanine ligase (443 aa).

110–116 is an ATP binding site; that stretch reads GAHGKTS.

The protein belongs to the MurCDEF family.

It localises to the cytoplasm. It catalyses the reaction UDP-N-acetyl-alpha-D-muramate + L-alanine + ATP = UDP-N-acetyl-alpha-D-muramoyl-L-alanine + ADP + phosphate + H(+). The protein operates within cell wall biogenesis; peptidoglycan biosynthesis. Cell wall formation. This chain is UDP-N-acetylmuramate--L-alanine ligase, found in Streptococcus agalactiae serotype Ia (strain ATCC 27591 / A909 / CDC SS700).